A 957-amino-acid chain; its full sequence is Serine-aspartate repeat-containing protein C (957 aa).

The first 50 residues, Met1–Ala50, serve as a signal peptide directing secretion. Residues Ala51–Arg166 form a disordered region. Residues Ala51–Lys495 form a ligand binding A region region. Over residues Gly56–Asn71 the composition is skewed to polar residues. Residues Lys72–Lys83 show a composition bias toward basic and acidic residues. Residues Asp84 to Pro114 show a composition bias toward polar residues. Positions Gln115–Asn132 are enriched in low complexity. Over residues Asp133–Lys164 the composition is skewed to polar residues. CNA-B domains follow at residues Lys496 to Pro606 and Lys607 to Thr717. The segment at Thr678–Gly937 is disordered. 2 stretches are compositionally biased toward acidic residues: residues Thr685–Glu695 and Tyr712–Ser896. An LPXTG sorting signal motif is present at residues Leu920–Gly924. The segment covering Glu922–Gly937 has biased composition (low complexity). At Thr923 the chain carries Pentaglycyl murein peptidoglycan amidated threonine. The propeptide at Gly924–Lys957 is removed by sortase.

Belongs to the serine-aspartate repeat-containing protein (SDr) family. Homodimerizes; via N2-Domain. Interacts with host NRXN1; this interaction mediates bacterial attachment to host cells.

It localises to the secreted. Its subcellular location is the cell wall. Its function is as follows. Cell surface-associated calcium-binding protein which plays an important role in adhesion and pathogenesis. Mediates interactions with components of the extracellular matrix such as host NRXN1 to promote bacterial adhesion. The polypeptide is Serine-aspartate repeat-containing protein C (sdrC) (Staphylococcus aureus (strain MSSA476)).